The chain runs to 295 residues: Sulfotransferase 1 family member D1 (295 aa).

48-53 (KSGTTW) lines the 3'-phosphoadenylyl sulfate pocket. Substrate contacts are provided by residues phenylalanine 81 and 106 to 108 (KTH). The active-site Proton acceptor is the histidine 108. Residues arginine 130 and serine 138 each coordinate 3'-phosphoadenylyl sulfate. Phenylalanine 142 serves as a coordination point for substrate. 3'-phosphoadenylyl sulfate-binding positions include tyrosine 193, serine 227, and 257-259 (RKG).

Belongs to the sulfotransferase 1 family.

It is found in the cytoplasm. Sulfotransferase with broad substrate specificity that utilizes 3'-phospho-5'-adenylyl sulfate (PAPS) as sulfonate donor to catalyze the sulfate conjugation of catecholamines, such as dopamine, prostaglandins, leukotriene E4, drugs and xenobiotic compounds. Has sulfotransferase activity towards p-nitrophenol, 2-naphthylamine and minoxidil (in vitro). Sulfonation increases the water solubility of most compounds, and therefore their renal excretion, but it can also result in bioactivation to form active metabolites. The chain is Sulfotransferase 1 family member D1 (Sult1d1) from Rattus norvegicus (Rat).